Consider the following 689-residue polypeptide: Glycine--tRNA ligase beta subunit (689 aa).

The protein belongs to the class-II aminoacyl-tRNA synthetase family. Tetramer of two alpha and two beta subunits.

It localises to the cytoplasm. The catalysed reaction is tRNA(Gly) + glycine + ATP = glycyl-tRNA(Gly) + AMP + diphosphate. This chain is Glycine--tRNA ligase beta subunit, found in Shewanella halifaxensis (strain HAW-EB4).